Here is a 392-residue protein sequence, read N- to C-terminus: Formate-dependent phosphoribosylglycinamide formyltransferase (392 aa).

Residues 20–21 (EL) and glutamate 80 contribute to the N(1)-(5-phospho-beta-D-ribosyl)glycinamide site. Residues arginine 112, lysine 153, 158 to 163 (SSGKGQ), 193 to 196 (EGFV), and glutamate 201 each bind ATP. The ATP-grasp domain maps to 117 to 306 (RLAAETLGLP…EFALHVRAIL (190 aa)). Positions 265 and 277 each coordinate Mg(2+). N(1)-(5-phospho-beta-D-ribosyl)glycinamide contacts are provided by residues aspartate 284, lysine 355, and 362–363 (RR).

The protein belongs to the PurK/PurT family. Homodimer.

It catalyses the reaction N(1)-(5-phospho-beta-D-ribosyl)glycinamide + formate + ATP = N(2)-formyl-N(1)-(5-phospho-beta-D-ribosyl)glycinamide + ADP + phosphate + H(+). It functions in the pathway purine metabolism; IMP biosynthesis via de novo pathway; N(2)-formyl-N(1)-(5-phospho-D-ribosyl)glycinamide from N(1)-(5-phospho-D-ribosyl)glycinamide (formate route): step 1/1. Its function is as follows. Involved in the de novo purine biosynthesis. Catalyzes the transfer of formate to 5-phospho-ribosyl-glycinamide (GAR), producing 5-phospho-ribosyl-N-formylglycinamide (FGAR). Formate is provided by PurU via hydrolysis of 10-formyl-tetrahydrofolate. This Aeromonas hydrophila subsp. hydrophila (strain ATCC 7966 / DSM 30187 / BCRC 13018 / CCUG 14551 / JCM 1027 / KCTC 2358 / NCIMB 9240 / NCTC 8049) protein is Formate-dependent phosphoribosylglycinamide formyltransferase.